The primary structure comprises 60 residues: MSKGTPSMGKRNKKTHIACRRCGSISYHARHKVCSACGFGRTSKLRSYKWTTKRSKIPTH.

Zn(2+)-binding residues include cysteine 19, cysteine 22, cysteine 34, and cysteine 37. The C4-type zinc finger occupies 19–37 (CRRCGSISYHARHKVCSAC).

It belongs to the eukaryotic ribosomal protein eL37 family. Zn(2+) is required as a cofactor.

In terms of biological role, binds to the 23S rRNA. In Methanosphaerula palustris (strain ATCC BAA-1556 / DSM 19958 / E1-9c), this protein is Large ribosomal subunit protein eL37.